Consider the following 317-residue polypeptide: Integrin-binding sialoprotein (317 aa).

The N-terminal stretch at 1–16 (MKTALILLSILGMACA) is a signal peptide. A phosphoserine mark is found at S31, S67, S74, S75, S94, and S100. The segment at 58–254 (FPVQGSSDSS…RTTSPPFGKT (197 aa)) is disordered. The span at 66–102 (SSEENGDDSSEEEEEEEETSNEGENNEESNEDEDSEA) shows a compositional bias: acidic residues. N104 carries N-linked (GlcNAc...) asparagine glycosylation. O-linked (GalNAc...) threonine glycans are attached at residues T119 and T122. At S149 the chain carries Phosphoserine. Residues 149 to 173 (SDEEEEEEEEGNENEESEAEVDENE) are compositionally biased toward acidic residues. Residues N177, N182, and N190 are each glycosylated (N-linked (GlcNAc...) asparagine). Residues 222–232 (KGTSKTTTSPN) are compositionally biased toward polar residues. O-linked (GalNAc...) threonine glycosylation is found at T227, T228, T229, T238, and T239. A Phosphoserine modification is found at S280. The short motif at 286–288 (RGD) is the Integrin-binding motif element. 2 positions are modified to sulfotyrosine: Y313 and Y314.

Monomer. Interacts with integrins; the interaction promotes cell adhesion. N-glycosylated; glycans consist of sialylated and core-fucosylated bi-, tri- and tetraantennary chains. In terms of processing, O-glycosylated at eight sites; mucin-type glycans contain Gal, GlcNAc, GalNAc and terminal NeuAc. In terms of tissue distribution, expressed in bone (at protein level). Expressed in trophoblast cells of placenta (at protein level). Expressed in brain.

The protein localises to the secreted. Binds tightly to hydroxyapatite. Appears to form an integral part of the mineralized matrix. Probably important to cell-matrix interaction. Promotes adhesion and migration of various cells via the alpha-V/beta-3 integrin receptor (ITGAV:ITGB3). The protein is Integrin-binding sialoprotein (IBSP) of Homo sapiens (Human).